We begin with the raw amino-acid sequence, 146 residues long: Hemoglobin subunit beta (146 aa).

The 145-residue stretch at 2–146 folds into the Globin domain; sequence EWTQQERSII…VVFALGRKYH (145 aa). The heme b site is built by H63 and H92.

This sequence belongs to the globin family. In terms of assembly, heterotetramer of two alpha chains and two beta chains. Red blood cells.

Its function is as follows. Involved in oxygen transport from gills to the various peripheral tissues. The sequence is that of Hemoglobin subunit beta (hbb) from Thunnus thynnus (Atlantic bluefin tuna).